A 244-amino-acid polypeptide reads, in one-letter code: Cell adhesion molecule CEACAM4 (244 aa).

The signal sequence occupies residues 1–35 (MGPPSAAPRGGHRPWQGLLITASLLTFWHPPTTVQ). The 104-residue stretch at 36 to 139 (FTIEALPSSA…DSDQATGQLH (104 aa)) folds into the Ig-like V-type domain. At 36–155 (FTIEALPSSA…PGLPVGAVAG (120 aa)) the chain is on the extracellular side. Asn57, Asn104, Asn111, and Asn126 each carry an N-linked (GlcNAc...) asparagine glycan. Residues 156-176 (IVTGVLVGVALVAALVCFLLL) form a helical membrane-spanning segment. The Cytoplasmic segment spans residues 177–244 (SRTGRASIQR…QIDHKADVVS (68 aa)). The segment at 186 to 215 (RDLREQPPPASTPGHGPSHRSTFSAPLPSP) is disordered. The short motif at 222 to 236 (YEELLYSDANIYCQI) is the ITAM element.

Belongs to the immunoglobulin superfamily. CEA family. As to quaternary structure, interacts through its phosphorylated ITAM domain with the SH2 domain-containing cytoplasmic proteins involved in signaling processes during phagocytosis. N-glycosylated. Post-translationally, the cytoplasmic ITAM-like sequence becomes tyrosine phosphorylated by SRC family PTKs upon ligand-mediated receptor clustering and allows to initiate phagocytosis of bound ligand. In terms of tissue distribution, granulocytes.

The protein resides in the membrane. In terms of biological role, granulocyte orphan receptor that acts as an trigger efficient phagocytosis of attached particles. This Homo sapiens (Human) protein is Cell adhesion molecule CEACAM4.